The sequence spans 596 residues: MSQGKIIKVSGPLVLASGMQEANIQDICRVGDLGLIGEIIEMRRDQASIQVYEETSGLGPGEPVITTGSPLSVELGPGLISQMFDGIQRPLERFQTITASDFLVRGVQLPNLDREAKWDFVPGLSVGDAVEAGDVLGTVQETNLVEHRIMVPVGVSGRLANISAGSFTVEETVYEIEQADGSVFKGTLMQKWPVRRGRPFAQKLIPVEPLVTGQRVIDTFFPVTKGGAAAVPGPFGAGKTVVQHQVAKFANVDIVIYVGCGERGNEMTDVLNEFPELIDPTTGQSIMQRTVLIANTSNMPVAAREASIYTGITIAEYFRDMGYSVAIMADSTSRWAEALREMSGRLEEMPGDEGYPAYLGSRIAEYYERAGRVKTLGSTAREGSITAIGAVSPPGGDISEPVTQNTLRIVKVFWGLDAQLAQRRHFPAINWLSSYSLYLDEVGAYIDQHEKIAWAEKVTKAMNILQKESELQEIVRLVGLDSLSEKDRLTMNAAKMIREDYLQQNAFDDVDTYTSFKKQVALLSNILTFDAEANRALELGAYFREIMEGTVELRDRIARSKFIHEDQLGKIQALSQTIEETLHQILAQGGLDNERH.

Residue 233 to 240 (GPFGAGKT) coordinates ATP.

This sequence belongs to the ATPase alpha/beta chains family.

It catalyses the reaction ATP + H2O + 4 H(+)(in) = ADP + phosphate + 5 H(+)(out). Its function is as follows. Produces ATP from ADP in the presence of a proton gradient across the membrane. The V-type alpha chain is a catalytic subunit. The chain is V-type ATP synthase alpha chain from Streptococcus sanguinis (strain SK36).